We begin with the raw amino-acid sequence, 321 residues long: Acyl-CoA 5-desaturase AL21 (321 aa).

Helical transmembrane passes span 42–62 (IFHI…PFTF) and 64–84 (WSAF…GTTL). Residues His87, His92, His124, His127, and His128 each coordinate Fe cation. The Histidine box-1 motif lies at 87-92 (HRNLTH). A Histidine box-2 motif is present at residues 124–128 (HRYHH). The helical transmembrane segment at 190-210 (LQAALLYMFGGFPFIVWGMAV) threads the bilayer. 4 residues coordinate Fe cation: His227, His256, His259, and His260. Positions 256 to 260 (HNNHH) match the Histidine box-3 motif.

It belongs to the fatty acid desaturase type 1 family. The cofactor is Fe(2+).

The protein localises to the membrane. The catalysed reaction is (11Z,14Z)-eicosadienoyl-CoA + AH2 + O2 = (5Z,11Z,14Z)-eicosatrienoyl-CoA + A + 2 H2O. It carries out the reaction (11Z,14Z,17Z)-eicosatrienoyl-CoA + AH2 + O2 = (5Z,11Z,14Z,17Z)-eicosatetraenoyl-CoA + A + 2 H2O. The protein operates within lipid metabolism; polyunsaturated fatty acid biosynthesis. Functionally, catalyzes the desaturation of 20:2Delta(11,14) and 20:3Delta(11,14,17) to generate sciadonic acid (20:3Delta(5,11,14)) and juniperonic acid (20:4Delta(5,11,14,17)). The enzyme can also use 16:0 and 18:0 as substrates. The polypeptide is Acyl-CoA 5-desaturase AL21 (Anemone leveillei (Windflower)).